The following is a 274-amino-acid chain: Large ribosomal subunit protein uL2cz/uL2cy (274 aa).

Disordered stretches follow at residues 1-21 and 225-274; these read MAIH…VDSQ and PVDH…RRSK.

It belongs to the universal ribosomal protein uL2 family. In terms of assembly, part of the 50S ribosomal subunit.

The protein resides in the plastid. It is found in the chloroplast. This chain is Large ribosomal subunit protein uL2cz/uL2cy (rpl2-A), found in Gossypium barbadense (Sea Island cotton).